The primary structure comprises 542 residues: CTP synthase (542 aa).

An amidoligase domain region spans residues 1-266; the sequence is MATNYIFVTG…DEFVCNRFHL (266 aa). S14 lines the CTP pocket. A UTP-binding site is contributed by S14. ATP-binding positions include 15–20 and D72; that span reads SLGKGI. Positions 72 and 140 each coordinate Mg(2+). Residues 147 to 149, 187 to 192, and K223 contribute to the CTP site; these read DIE and KTKPTQ. UTP-binding positions include 187-192 and K223; that span reads KTKPTQ. 239 to 241 contacts ATP; that stretch reads KDV. Residues 291–542 enclose the Glutamine amidotransferase type-1 domain; the sequence is TIGMVGKYVE…VKAAKENQKK (252 aa). G352 serves as a coordination point for L-glutamine. The Nucleophile; for glutamine hydrolysis role is filled by C379. L-glutamine-binding positions include 380 to 383, E403, and R470; that span reads LGMQ. Residues H515 and E517 contribute to the active site.

The protein belongs to the CTP synthase family. Homotetramer.

It carries out the reaction UTP + L-glutamine + ATP + H2O = CTP + L-glutamate + ADP + phosphate + 2 H(+). The enzyme catalyses L-glutamine + H2O = L-glutamate + NH4(+). It catalyses the reaction UTP + NH4(+) + ATP = CTP + ADP + phosphate + 2 H(+). Its pathway is pyrimidine metabolism; CTP biosynthesis via de novo pathway; CTP from UDP: step 2/2. Its activity is regulated as follows. Allosterically activated by GTP, when glutamine is the substrate; GTP has no effect on the reaction when ammonia is the substrate. The allosteric effector GTP functions by stabilizing the protein conformation that binds the tetrahedral intermediate(s) formed during glutamine hydrolysis. Inhibited by the product CTP, via allosteric rather than competitive inhibition. In terms of biological role, catalyzes the ATP-dependent amination of UTP to CTP with either L-glutamine or ammonia as the source of nitrogen. Regulates intracellular CTP levels through interactions with the four ribonucleotide triphosphates. This is CTP synthase from Actinobacillus succinogenes (strain ATCC 55618 / DSM 22257 / CCUG 43843 / 130Z).